The sequence spans 103 residues: Large ribosomal subunit protein uL24 (103 aa).

The protein belongs to the universal ribosomal protein uL24 family. In terms of assembly, part of the 50S ribosomal subunit.

Functionally, one of two assembly initiator proteins, it binds directly to the 5'-end of the 23S rRNA, where it nucleates assembly of the 50S subunit. Its function is as follows. One of the proteins that surrounds the polypeptide exit tunnel on the outside of the subunit. In Dehalococcoides mccartyi (strain ATCC BAA-2100 / JCM 16839 / KCTC 5957 / BAV1), this protein is Large ribosomal subunit protein uL24.